The following is a 151-amino-acid chain: Protein PLANT CADMIUM RESISTANCE 1 (151 aa).

Transmembrane regions (helical) follow at residues isoleucine 31–valine 47 and cysteine 54–glycine 71.

Belongs to the cornifelin family. As to quaternary structure, homopentamer. In terms of tissue distribution, expressed in aerial part, but not in roots. Detected in the guard and mesophyll cells.

The protein resides in the cell membrane. Involved in glutathione-independent cadmium resistance. Reduces cadmium uptake rather than activating efflux, but is not closely coupled to calcium transporter. The protein is Protein PLANT CADMIUM RESISTANCE 1 (PCR1) of Arabidopsis thaliana (Mouse-ear cress).